Here is a 207-residue protein sequence, read N- to C-terminus: MLEHFLSYLTQEHLTELFQSYRAFGPLIAVLLPLIEAFLPFLPLIVFVVANTNSFGLWEGFILSWAGSTAGSILVFLIVRQYGQRKLLGFIRSHPSVRKLMLWVERHGFGPMFLLLCFPFTPSAAVNVVAGLSRIGTRPFILAAASGKLVMIFMISFIGYDLHALITQPIRTVIAVLVITVLWYVGKKVERYLHVRASQREHDGGRQ.

Transmembrane regions (helical) follow at residues 28–48, 59–79, 112–132, 140–160, and 165–185; these read IAVL…IVFV, EGFI…FLIV, MFLL…VAGL, FILA…FIGY, and LITQ…LWYV.

It localises to the cell membrane. This is an uncharacterized protein from Bacillus subtilis (strain 168).